The following is a 1228-amino-acid chain: Membrane-anchored lipid-binding protein LAM1 (1228 aa).

The Cytoplasmic portion of the chain corresponds to 1 to 1062; the sequence is MHEHKAELRL…IFKCFSKVNK (1062 aa). One can recognise a PH domain in the interval 308 to 421; the sequence is EKGLSGWLYM…WINTLTSHKR (114 aa). The VASt domain occupies 773–978; it reads EAWCYFQDNF…KTREYLKKFN (206 aa). Residues 1063-1083 form a helical membrane-spanning segment; that stretch reads TLYYCLLISAVTNLFFVGKSI. The Lumenal portion of the chain corresponds to 1084 to 1228; that stretch reads HSYFSVKSAE…EYNRLSAIPV (145 aa). The N-linked (GlcNAc...) asparagine glycan is linked to Asn1205.

The protein belongs to the SIP3 family.

The protein localises to the mitochondrion membrane. Its subcellular location is the endoplasmic reticulum membrane. Its function is as follows. Involved in mitochondrial fragmentation during programmed cell death in response to high levels of alpha-factor mating pheromone or the drug amiodarone. May be involved in sterol transfer between intracellular membranes. The polypeptide is Membrane-anchored lipid-binding protein LAM1 (Saccharomyces cerevisiae (strain ATCC 204508 / S288c) (Baker's yeast)).